Consider the following 268-residue polypeptide: Undecaprenyl-diphosphatase (268 aa).

8 consecutive transmembrane segments (helical) span residues 8-28 (VILG…TGHL), 41-61 (AFWD…IVGL), 83-103 (FVIG…VAGK), 108-128 (VLFN…ILLW), 144-164 (FPLL…IPGV), 184-204 (AAEF…AYDF), 218-238 (IVAI…KTFL), and 246-266 (FVVF…ALAL).

This sequence belongs to the UppP family.

Its subcellular location is the cell inner membrane. It carries out the reaction di-trans,octa-cis-undecaprenyl diphosphate + H2O = di-trans,octa-cis-undecaprenyl phosphate + phosphate + H(+). Its function is as follows. Catalyzes the dephosphorylation of undecaprenyl diphosphate (UPP). Confers resistance to bacitracin. This chain is Undecaprenyl-diphosphatase, found in Bradyrhizobium diazoefficiens (strain JCM 10833 / BCRC 13528 / IAM 13628 / NBRC 14792 / USDA 110).